The chain runs to 359 residues: Golgi-resident adenosine 3',5'-bisphosphate 3'-phosphatase (359 aa).

An N-acetylmethionine modification is found at Met-1. Residues 1 to 12 (MAPMGIRLSPLG) lie on the Cytoplasmic side of the membrane. The helical transmembrane segment at 13–33 (VAVFCLLGLGVLYHLYSGFLA) threads the bilayer. Residues 34-359 (GRFSLFGLGG…LPDLEKTGHK (326 aa)) are Lumenal-facing. The disordered stretch occupies residues 86–106 (ESNVLHEKSKGKTREGAEDKM). Asp-110 serves as the catalytic Proton acceptor. The Mg(2+) site is built by Glu-133, Asp-174, Leu-176, and Asp-177. Thr-179 (proton acceptor) is an active-site residue. Residues Ser-242 and His-245 each contribute to the AMP site. Asn-259 carries an N-linked (GlcNAc...) asparagine glycan. AMP is bound by residues Gly-268 and Lys-272. Residue Asp-300 participates in Mg(2+) binding.

The protein belongs to the inositol monophosphatase superfamily. The cofactor is Mg(2+). Post-translationally, contains N-linked glycan resistant to endoglycosydase H.

It is found in the golgi apparatus. The protein localises to the trans-Golgi network membrane. The catalysed reaction is adenosine 3',5'-bisphosphate + H2O = AMP + phosphate. The protein operates within sulfur metabolism. Its activity is regulated as follows. Strongly inhibited by lithium. Its function is as follows. Exhibits 3'-nucleotidase activity toward adenosine 3',5'-bisphosphate (PAP), namely hydrolyzes adenosine 3',5'-bisphosphate into adenosine 5'-monophosphate (AMP) and a phosphate. May play a role in the formation of skeletal elements derived through endochondral ossification, possibly by clearing adenosine 3',5'-bisphosphate produced by Golgi sulfotransferases during glycosaminoglycan sulfation. Has no activity toward 3'-phosphoadenosine 5'-phosphosulfate (PAPS) or inositol phosphate (IP) substrates including I(1)P, I(1,4)P2, I(1,3,4)P3, I(1,4,5)P3 and I(1,3,4,5)P4. This Homo sapiens (Human) protein is Golgi-resident adenosine 3',5'-bisphosphate 3'-phosphatase.